We begin with the raw amino-acid sequence, 309 residues long: tRNA pseudouridine synthase B (309 aa).

D52 serves as the catalytic Nucleophile.

The protein belongs to the pseudouridine synthase TruB family. Type 1 subfamily.

It carries out the reaction uridine(55) in tRNA = pseudouridine(55) in tRNA. In terms of biological role, responsible for synthesis of pseudouridine from uracil-55 in the psi GC loop of transfer RNAs. This chain is tRNA pseudouridine synthase B, found in Leptospira interrogans serogroup Icterohaemorrhagiae serovar copenhageni (strain Fiocruz L1-130).